The sequence spans 971 residues: Reversion-inducing cysteine-rich protein with Kazal motifs (971 aa).

A signal peptide spans 1 to 22 (MASVRASPRSALLLLLAAAGVA). The stretch at 37-84 (CCNHSKDNQMCRDVCEQIFSSKSESRLKHLLQRAPDYCPETMVEIWSC) is one Knot 1 repeat. Positions 37 to 338 (CCNHSKDNQM…NPVEVSMLTC (302 aa)) are 5 X Knot repeats. N-linked (GlcNAc...) asparagine glycans are attached at residues asparagine 39 and asparagine 86. Knot repeat units follow at residues 104 to 141 (CCEL…LFSC) and 151 to 197 (CCSY…LIHC). Asparagine 200 carries N-linked (GlcNAc...) asparagine glycosylation. Knot repeat units lie at residues 216–263 (CCDR…LWQC) and 292–338 (CCSK…MLTC). N-linked (GlcNAc...) asparagine glycans are attached at residues asparagine 297 and asparagine 352. 3 consecutive Kazal-like domains span residues 627 to 673 (TFTG…PCIS), 698 to 752 (TFDK…PCQP), and 753 to 789 (FCRA…PCQA). Intrachain disulfides connect cysteine 633–cysteine 658, cysteine 635–cysteine 654, cysteine 643–cysteine 671, cysteine 716–cysteine 735, cysteine 724–cysteine 750, and cysteine 761–cysteine 787. A Kazal-like 2; degenerate domain is found at 704-750 (CSQYECVPRQLTCDQARDPVCDTDHMEHSNLCTLYQRGKSLSYRGPC). Residue serine 942 is the site of GPI-anchor amidated serine attachment. The propeptide at 943–971 (SAVVGRPLFHSLLLLLSLGLTVHLLWTRP) is removed in mature form.

Belongs to the RECK family. Interacts (via knot repeats) with WNT7A (via disordered linker region); the interaction is direct. Interacts (via knot repeats) with WNT7B (via disordered linker region); the interaction is direct. Interacts with ADGRA2; the interaction is direct. Interacts with MMP9.

The protein localises to the cell membrane. Its function is as follows. Functions together with ADGRA2 to enable brain endothelial cells to selectively respond to Wnt7 signals (WNT7A or WNT7B). Plays a key role in Wnt7-specific responses: required for central nervous system (CNS) angiogenesis and blood-brain barrier regulation. Acts as a Wnt7-specific coactivator of canonical Wnt signaling by decoding Wnt ligands: acts by interacting specifically with the disordered linker region of Wnt7, thereby conferring ligand selectivity for Wnt7. ADGRA2 is then required to deliver RECK-bound Wnt7 to frizzled by assembling a higher-order RECK-ADGRA2-Fzd-LRP5-LRP6 complex. Also acts as a serine protease inhibitor: negatively regulates matrix metalloproteinase-9 (MMP9) by suppressing MMP9 secretion and by direct inhibition of its enzymatic activity. Also inhibits metalloproteinase activity of MMP2 and MMP14 (MT1-MMP). This chain is Reversion-inducing cysteine-rich protein with Kazal motifs, found in Mus musculus (Mouse).